We begin with the raw amino-acid sequence, 292 residues long: 4-hydroxy-tetrahydrodipicolinate synthase (292 aa).

Thr45 lines the pyruvate pocket. The active-site Proton donor/acceptor is the Tyr133. Lys161 functions as the Schiff-base intermediate with substrate in the catalytic mechanism. Residue Ile203 participates in pyruvate binding.

It belongs to the DapA family. As to quaternary structure, homotetramer; dimer of dimers.

Its subcellular location is the cytoplasm. The catalysed reaction is L-aspartate 4-semialdehyde + pyruvate = (2S,4S)-4-hydroxy-2,3,4,5-tetrahydrodipicolinate + H2O + H(+). It functions in the pathway amino-acid biosynthesis; L-lysine biosynthesis via DAP pathway; (S)-tetrahydrodipicolinate from L-aspartate: step 3/4. Its function is as follows. Catalyzes the condensation of (S)-aspartate-beta-semialdehyde [(S)-ASA] and pyruvate to 4-hydroxy-tetrahydrodipicolinate (HTPA). This Escherichia fergusonii (strain ATCC 35469 / DSM 13698 / CCUG 18766 / IAM 14443 / JCM 21226 / LMG 7866 / NBRC 102419 / NCTC 12128 / CDC 0568-73) protein is 4-hydroxy-tetrahydrodipicolinate synthase.